A 684-amino-acid polypeptide reads, in one-letter code: uncharacterized protein (684 aa).

2 disordered regions span residues 267–353 (MGAR…TCTD) and 388–449 (SVAS…AERE). Over residues 316 to 326 (GMTSAKASTSY) the composition is skewed to polar residues. Over residues 438 to 449 (RPTEARRRAERE) the composition is skewed to basic and acidic residues.

This is an uncharacterized protein from Colorado tick fever virus (strain USA/Florio N-7180) (CTFV).